Here is a 361-residue protein sequence, read N- to C-terminus: Salt tolerance receptor-like cytoplasmic kinase 1 (361 aa).

S-palmitoyl cysteine attachment occurs at residues C5, C10, and C14. The Protein kinase domain maps to 67-347 (GFSSRVIGHG…RALQEKTSAL (281 aa)). ATP contacts are provided by residues 73–81 (IGHGGFSTV) and K95. Residue D195 is the Proton acceptor of the active site.

Belongs to the protein kinase superfamily. Ser/Thr protein kinase family. Self-interacts. Interacts with CATA, CATB and CATC at the plasma membrane. In terms of processing, palmitoylated. Palmotylation at Cys-5, Cys-10 and Cys-14 by DHHC9 is required for plasma membrane targeting and STRK1 function. Post-translationally, autophosphorylated. As to expression, accumulates in seeds. Mainly expressed in young roots, and, to a lower extent, in leaf veins, seedlings, stems, leaf sheath and young spikelet.

It localises to the cell membrane. It carries out the reaction L-seryl-[protein] + ATP = O-phospho-L-seryl-[protein] + ADP + H(+). The enzyme catalyses L-threonyl-[protein] + ATP = O-phospho-L-threonyl-[protein] + ADP + H(+). It catalyses the reaction L-tyrosyl-[protein] + ATP = O-phospho-L-tyrosyl-[protein] + ADP + H(+). Its function is as follows. Acts probably as a dual specificity protein kinase. Regulates hydrogen peroxide (H(2)O(2)) homeostasis and improves salt tolerance by phosphorylating tyrosine residues of CATC thus activating its catalase activity. Promotes growth at the seedling stage and prevents grain yield loss under salt stress conditions. In Oryza sativa subsp. japonica (Rice), this protein is Salt tolerance receptor-like cytoplasmic kinase 1.